A 291-amino-acid chain; its full sequence is Acetyl-coenzyme A carboxylase carboxyl transferase subunit beta (291 aa).

Residues 29-291 (IMTKCPDCKK…TGGDLEWLEN (263 aa)) enclose the CoA carboxyltransferase N-terminal domain. Residues cysteine 33, cysteine 36, cysteine 52, and cysteine 55 each contribute to the Zn(2+) site. The C4-type zinc finger occupies 33-55 (CPDCKKIMLTKELDKNLRVCMNC).

Belongs to the AccD/PCCB family. As to quaternary structure, acetyl-CoA carboxylase is a heterohexamer composed of biotin carboxyl carrier protein (AccB), biotin carboxylase (AccC) and two subunits each of ACCase subunit alpha (AccA) and ACCase subunit beta (AccD). The cofactor is Zn(2+).

It localises to the cytoplasm. The enzyme catalyses N(6)-carboxybiotinyl-L-lysyl-[protein] + acetyl-CoA = N(6)-biotinyl-L-lysyl-[protein] + malonyl-CoA. The protein operates within lipid metabolism; malonyl-CoA biosynthesis; malonyl-CoA from acetyl-CoA: step 1/1. In terms of biological role, component of the acetyl coenzyme A carboxylase (ACC) complex. Biotin carboxylase (BC) catalyzes the carboxylation of biotin on its carrier protein (BCCP) and then the CO(2) group is transferred by the transcarboxylase to acetyl-CoA to form malonyl-CoA. The polypeptide is Acetyl-coenzyme A carboxylase carboxyl transferase subunit beta (Bacillus licheniformis (strain ATCC 14580 / DSM 13 / JCM 2505 / CCUG 7422 / NBRC 12200 / NCIMB 9375 / NCTC 10341 / NRRL NRS-1264 / Gibson 46)).